Reading from the N-terminus, the 533-residue chain is Subtilisin-like serine protease pepC (533 aa).

An N-terminal signal peptide occupies residues 1–16 (MKGILGLSLLPLLTAA). Residues 43 to 136 (SYIVVFKKHV…IERDSEVHTM (94 aa)) form the Inhibitor I9 domain. The 306-residue stretch at 145 to 450 (PWGLARISHR…VGIYKRNELT (306 aa)) folds into the Peptidase S8 domain. Catalysis depends on charge relay system residues aspartate 181 and histidine 213. Asparagine 283 carries an N-linked (GlcNAc...) asparagine glycan. Residues cysteine 320 and cysteine 351 are joined by a disulfide bond. Catalysis depends on serine 379, which acts as the Charge relay system. Residue asparagine 435 is glycosylated (N-linked (GlcNAc...) asparagine). A compositionally biased stretch (polar residues) spans 496–513 (KSCSPRSLVPSTARSRMP). A disordered region spans residues 496 to 519 (KSCSPRSLVPSTARSRMPSSHRSE).

It belongs to the peptidase S8 family.

This is Subtilisin-like serine protease pepC (pepC) from Aspergillus niger.